A 158-amino-acid chain; its full sequence is Curculin-2 (158 aa).

A signal peptide spans 1–22 (MAAKFLLTILVTFAAVASLGMA). The 109-residue stretch at 23 to 131 (DSVLLSGQTL…VLWPLGLNGC (109 aa)) folds into the Bulb-type lectin domain. An intrachain disulfide couples Cys51 to Cys74. Asn103 is a glycosylation site (N-linked (GlcNAc...) asparagine). A propeptide spanning residues 136–158 (GEITVAKDSTEPQHEDIKMVINN) is cleaved from the precursor.

In terms of assembly, heterodimer with curculin-1; Disulfide-linked.

Functionally, taste-modifying protein; sweet-tasting. After curculin, water elicits a sweet taste, and sour substances induce a stronger sense of sweetness. The chain is Curculin-2 from Molineria latifolia (Lumbah).